The chain runs to 130 residues: Small ribosomal subunit protein uS9 (130 aa).

This sequence belongs to the universal ribosomal protein uS9 family.

The protein is Small ribosomal subunit protein uS9 of Brevibacillus brevis (strain 47 / JCM 6285 / NBRC 100599).